The sequence spans 353 residues: UDP-3-O-acylglucosamine N-acyltransferase (353 aa).

Catalysis depends on histidine 246, which acts as the Proton acceptor.

This sequence belongs to the transferase hexapeptide repeat family. LpxD subfamily. Homotrimer.

The enzyme catalyses a UDP-3-O-[(3R)-3-hydroxyacyl]-alpha-D-glucosamine + a (3R)-hydroxyacyl-[ACP] = a UDP-2-N,3-O-bis[(3R)-3-hydroxyacyl]-alpha-D-glucosamine + holo-[ACP] + H(+). The protein operates within bacterial outer membrane biogenesis; LPS lipid A biosynthesis. Functionally, catalyzes the N-acylation of UDP-3-O-acylglucosamine using 3-hydroxyacyl-ACP as the acyl donor. Is involved in the biosynthesis of lipid A, a phosphorylated glycolipid that anchors the lipopolysaccharide to the outer membrane of the cell. In Chlorobaculum tepidum (strain ATCC 49652 / DSM 12025 / NBRC 103806 / TLS) (Chlorobium tepidum), this protein is UDP-3-O-acylglucosamine N-acyltransferase.